The following is a 255-amino-acid chain: Pimeloyl-[acyl-carrier protein] methyl ester esterase (255 aa).

The AB hydrolase-1 domain occupies 16-242 (LVLLHGWGLN…AAHAPFISHP (227 aa)). Residues Trp22, 82–83 (SL), and 143–147 (FLALQ) each bind substrate. The active-site Nucleophile is the Ser82. Active-site residues include Asp207 and His235. Substrate is bound at residue His235.

It belongs to the AB hydrolase superfamily. Carboxylesterase BioH family. In terms of assembly, monomer.

It localises to the cytoplasm. It carries out the reaction 6-carboxyhexanoyl-[ACP] methyl ester + H2O = 6-carboxyhexanoyl-[ACP] + methanol + H(+). Its pathway is cofactor biosynthesis; biotin biosynthesis. The physiological role of BioH is to remove the methyl group introduced by BioC when the pimeloyl moiety is complete. It allows to synthesize pimeloyl-ACP via the fatty acid synthetic pathway through the hydrolysis of the ester bonds of pimeloyl-ACP esters. The protein is Pimeloyl-[acyl-carrier protein] methyl ester esterase of Pectobacterium carotovorum subsp. carotovorum (strain PC1).